The following is a 342-amino-acid chain: MSKAYEQSGVNIHAGYEAVERMSSHVKRTMRKEVIGGLGGFGATFDLSQLNMTAPVLVSGTDGVGTKLKLAIDYGKHDSIGIDAVAMCVNDILTTGAEPLYFLDYIATNKVVPEVIEQIVKGISDACVETNTALIGGETAEMGEMYHEGEYDVAGFAVGAVEKDDYVDGSEVKEGQVVIGLASSGIHSNGYSLVRKLINESGIDLASNFDNRPFIDVFLEPTKLYVKPVLALKKEVSIKAMNHITGGGFYENIPRALPAGYAARIDTTSFPTPKIFDWLQQQGNIDTNEMYNIFNMGIGYTVIVDEKDASRALKILAEQNVEAYQIGHIVKNESTAIELLGV.

This sequence belongs to the AIR synthase family.

It localises to the cytoplasm. The enzyme catalyses 2-formamido-N(1)-(5-O-phospho-beta-D-ribosyl)acetamidine + ATP = 5-amino-1-(5-phospho-beta-D-ribosyl)imidazole + ADP + phosphate + H(+). It functions in the pathway purine metabolism; IMP biosynthesis via de novo pathway; 5-amino-1-(5-phospho-D-ribosyl)imidazole from N(2)-formyl-N(1)-(5-phospho-D-ribosyl)glycinamide: step 2/2. The sequence is that of Phosphoribosylformylglycinamidine cyclo-ligase from Staphylococcus aureus (strain Mu3 / ATCC 700698).